Reading from the N-terminus, the 131-residue chain is Ribosome-binding factor A (131 aa).

Belongs to the RbfA family. Monomer. Binds 30S ribosomal subunits, but not 50S ribosomal subunits or 70S ribosomes.

It localises to the cytoplasm. In terms of biological role, one of several proteins that assist in the late maturation steps of the functional core of the 30S ribosomal subunit. Associates with free 30S ribosomal subunits (but not with 30S subunits that are part of 70S ribosomes or polysomes). Required for efficient processing of 16S rRNA. May interact with the 5'-terminal helix region of 16S rRNA. This is Ribosome-binding factor A from Christiangramia forsetii (strain DSM 17595 / CGMCC 1.15422 / KT0803) (Gramella forsetii).